Consider the following 210-residue polypeptide: Pyridoxine/pyridoxamine 5'-phosphate oxidase (210 aa).

Substrate is bound by residues 7–10 (REDY) and Lys65. FMN-binding positions include 60 to 65 (RMVLLK), 75 to 76 (FT), Arg81, Lys82, and Gln104. The substrate site is built by Tyr122, Arg126, and Ser130. FMN is bound by residues 139 to 140 (QS) and Trp183. 189–191 (RLH) serves as a coordination point for substrate. An FMN-binding site is contributed by Arg193.

This sequence belongs to the pyridoxamine 5'-phosphate oxidase family. As to quaternary structure, homodimer. FMN serves as cofactor.

The enzyme catalyses pyridoxamine 5'-phosphate + O2 + H2O = pyridoxal 5'-phosphate + H2O2 + NH4(+). It catalyses the reaction pyridoxine 5'-phosphate + O2 = pyridoxal 5'-phosphate + H2O2. It functions in the pathway cofactor metabolism; pyridoxal 5'-phosphate salvage; pyridoxal 5'-phosphate from pyridoxamine 5'-phosphate: step 1/1. Its pathway is cofactor metabolism; pyridoxal 5'-phosphate salvage; pyridoxal 5'-phosphate from pyridoxine 5'-phosphate: step 1/1. In terms of biological role, catalyzes the oxidation of either pyridoxine 5'-phosphate (PNP) or pyridoxamine 5'-phosphate (PMP) into pyridoxal 5'-phosphate (PLP). This chain is Pyridoxine/pyridoxamine 5'-phosphate oxidase, found in Neisseria meningitidis serogroup B (strain ATCC BAA-335 / MC58).